An 82-amino-acid chain; its full sequence is Ice-structuring protein B (82 aa).

Positions 1–23 (MALSLFTVGQLIFLFWTMRITEA) are cleaved as a signal peptide. Residues 24 to 44 (RPDPAAKAAPAAAAVPAAAAP) constitute a propeptide, removed by a dipeptidylpeptidase. Residue Arg-81 is modified to Arginine amide.

This sequence belongs to the type-I AFP family. Amidated. In terms of tissue distribution, detected in liver (at protein level).

The protein localises to the secreted. The protein resides in the extracellular space. In terms of biological role, contributes to protect fish blood from freezing at subzero sea water temperatures. Lowers the blood freezing point. Binds to nascent ice crystals and prevents further growth. This Pseudopleuronectes americanus (Winter flounder) protein is Ice-structuring protein B.